Here is a 1401-residue protein sequence, read N- to C-terminus: DNA-directed RNA polymerase subunit beta' (1401 aa).

Residues cysteine 70, cysteine 72, cysteine 85, and cysteine 88 each contribute to the Zn(2+) site. Mg(2+) is bound by residues aspartate 460, aspartate 462, and aspartate 464. Positions 808, 882, 889, and 892 each coordinate Zn(2+).

It belongs to the RNA polymerase beta' chain family. As to quaternary structure, the RNAP catalytic core consists of 2 alpha, 1 beta, 1 beta' and 1 omega subunit. When a sigma factor is associated with the core the holoenzyme is formed, which can initiate transcription. Mg(2+) is required as a cofactor. Zn(2+) serves as cofactor.

It catalyses the reaction RNA(n) + a ribonucleoside 5'-triphosphate = RNA(n+1) + diphosphate. DNA-dependent RNA polymerase catalyzes the transcription of DNA into RNA using the four ribonucleoside triphosphates as substrates. The protein is DNA-directed RNA polymerase subunit beta' of Legionella pneumophila subsp. pneumophila (strain Philadelphia 1 / ATCC 33152 / DSM 7513).